Reading from the N-terminus, the 324-residue chain is Probable 6-phosphogluconolactonase 4, chloroplastic (324 aa).

The transit peptide at 1 to 63 directs the protein to the chloroplast; sequence MSVSAAVAAA…PAMATDGAAA (63 aa). The segment at 19–43 is disordered; sequence ARHRSPPASRVAATSRGRPFSSGPH.

The protein belongs to the glucosamine/galactosamine-6-phosphate isomerase family. 6-phosphogluconolactonase subfamily.

It is found in the plastid. The protein resides in the chloroplast. The enzyme catalyses 6-phospho-D-glucono-1,5-lactone + H2O = 6-phospho-D-gluconate + H(+). It functions in the pathway carbohydrate degradation; pentose phosphate pathway; D-ribulose 5-phosphate from D-glucose 6-phosphate (oxidative stage): step 2/3. Functionally, hydrolysis of 6-phosphogluconolactone to 6-phosphogluconate. In Oryza sativa subsp. japonica (Rice), this protein is Probable 6-phosphogluconolactonase 4, chloroplastic.